A 132-amino-acid polypeptide reads, in one-letter code: Small ribosomal subunit protein uS8 (132 aa).

Belongs to the universal ribosomal protein uS8 family. In terms of assembly, part of the 30S ribosomal subunit. Contacts proteins S5 and S12.

Its function is as follows. One of the primary rRNA binding proteins, it binds directly to 16S rRNA central domain where it helps coordinate assembly of the platform of the 30S subunit. This is Small ribosomal subunit protein uS8 from Bacillus cytotoxicus (strain DSM 22905 / CIP 110041 / 391-98 / NVH 391-98).